Consider the following 230-residue polypeptide: RING finger protein 141 (230 aa).

The N-myristoyl glycine moiety is linked to residue G2. An RING-type zinc finger spans residues 155 to 192 (CCICMDGRADLILPCAHSFCQKCIDKWSDRHRNCPICR).

It localises to the membrane. In terms of biological role, may be involved in spermatogenesis. The sequence is that of RING finger protein 141 (RNF141) from Bos taurus (Bovine).